A 446-amino-acid chain; its full sequence is sn-2 acyl-lipid omega-3 desaturase (ferredoxin), chloroplastic (446 aa).

The N-terminal 65 residues, 1 to 65, are a transit peptide targeting the chloroplast; it reads MANLVLSECG…DGFTRNWALN (65 aa). The next 2 helical transmembrane spans lie at 118–138 and 141–161; these read LSYVVRDVAIVFALAAGAAYL and WIVWPLYWLAQGTMFWALFVL. The Histidine box-1 motif lies at 163-167; the sequence is HDCGH. Positions 199 to 203 match the Histidine box-2 motif; the sequence is HRTHH. 3 helical membrane passes run 231 to 250, 279 to 299, and 302 to 322; these read RFFRFTLPLVMLAYPFYLWA, TACWTAMAALLVCLNFTIGPI, and LKLYGIPYWINVMWLDFVTYL. A Histidine box-3 motif is present at residues 366–370; sequence HVIHH.

This sequence belongs to the fatty acid desaturase type 1 family. In terms of tissue distribution, most abundant in leaves and seedlings.

It is found in the plastid. It localises to the chloroplast inner membrane. It carries out the reaction a (7Z,10Z)-hexadecadienoyl-containing glycerolipid + 2 reduced [2Fe-2S]-[ferredoxin] + O2 + 2 H(+) = a (7Z,10Z,13Z)-hexadecatrienoyl-containing glycerolipid + 2 oxidized [2Fe-2S]-[ferredoxin] + 2 H2O. The enzyme catalyses a (9Z,12Z)-octadecadienoyl-containing glycerolipid + 2 reduced [2Fe-2S]-[ferredoxin] + O2 + 2 H(+) = (9Z,12Z,15Z)-octadecatrienoyl-containing glycerolipid + 2 oxidized [2Fe-2S]-[ferredoxin] + 2 H2O. It functions in the pathway lipid metabolism; polyunsaturated fatty acid biosynthesis. Its function is as follows. Chloroplast omega-3 fatty acid desaturase introduces the third double bond in the biosynthesis of 16:3 and 18:3 fatty acids, important constituents of plant membranes. It is thought to use ferredoxin as an electron donor and to act on fatty acids esterified to galactolipids, sulfolipids and phosphatidylglycerol. This chain is sn-2 acyl-lipid omega-3 desaturase (ferredoxin), chloroplastic, found in Arabidopsis thaliana (Mouse-ear cress).